Reading from the N-terminus, the 346-residue chain is 3 beta-hydroxysteroid dehydrogenase/Delta 5--&gt;4-isomerase (346 aa).

Tyr147 acts as the Proton acceptor in catalysis. Residue Lys151 participates in NAD(+) binding.

Belongs to the 3-beta-HSD family.

The catalysed reaction is a 3beta-hydroxy-Delta(5)-steroid + NAD(+) = a 3-oxo-Delta(5)-steroid + NADH + H(+). The enzyme catalyses a 3-oxo-Delta(5)-steroid = a 3-oxo-Delta(4)-steroid. The protein operates within lipid metabolism; steroid biosynthesis. Its function is as follows. Catalyzes the oxidative conversion of Delta(5)-ene-3-beta-hydroxy steroid, and the oxidative conversion of ketosteroids. The 3-beta-HSD enzymatic system plays a crucial role in the biosynthesis of all classes of hormonal steroids. During viral infection, steroid production contributes to virulence by inhibiting the host inflammatory response. This is 3 beta-hydroxysteroid dehydrogenase/Delta 5--&gt;4-isomerase (OPG174) from Homo sapiens (Human).